Reading from the N-terminus, the 25-residue chain is Css54 (25 aa).

Expressed by the venom gland.

Its subcellular location is the secreted. The protein localises to the target cell membrane. In terms of biological role, amphipathic peptide that shows antibacterial activity against E.coli (MIC=12.5 ug/ml) and S.aureus (MIC=12.5 ug/ml). Has hemolytic activity against human erythrocytes (25 uM provokes 83% of hemolysis). May act by disrupting the integrity of the bacterial cell membrane. Increases efficacy of antibiotics (ethambutol, pyrazinamide, isoniazid, rifampicin) when tested against S.aureus, probably by facilitating their incorporation into the bacteria. This chain is Css54, found in Centruroides suffusus (Durango bark scorpion).